A 130-amino-acid chain; its full sequence is Ribosome-binding factor A (130 aa).

The protein belongs to the RbfA family. In terms of assembly, monomer. Binds 30S ribosomal subunits, but not 50S ribosomal subunits or 70S ribosomes.

Its subcellular location is the cytoplasm. Functionally, one of several proteins that assist in the late maturation steps of the functional core of the 30S ribosomal subunit. Associates with free 30S ribosomal subunits (but not with 30S subunits that are part of 70S ribosomes or polysomes). Required for efficient processing of 16S rRNA. May interact with the 5'-terminal helix region of 16S rRNA. In Pseudomonas aeruginosa (strain LESB58), this protein is Ribosome-binding factor A.